We begin with the raw amino-acid sequence, 138 residues long: Protein FAM136A (138 aa).

The protein belongs to the FAM136 family.

This is Protein FAM136A (fam136a) from Xenopus laevis (African clawed frog).